The primary structure comprises 392 residues: ATP phosphoribosyltransferase regulatory subunit (392 aa).

Belongs to the class-II aminoacyl-tRNA synthetase family. HisZ subfamily. In terms of assembly, heteromultimer composed of HisG and HisZ subunits.

It is found in the cytoplasm. The protein operates within amino-acid biosynthesis; L-histidine biosynthesis; L-histidine from 5-phospho-alpha-D-ribose 1-diphosphate: step 1/9. In terms of biological role, required for the first step of histidine biosynthesis. May allow the feedback regulation of ATP phosphoribosyltransferase activity by histidine. The sequence is that of ATP phosphoribosyltransferase regulatory subunit from Prochlorococcus marinus (strain MIT 9211).